A 526-amino-acid chain; its full sequence is Collagen alpha-2(I) chain (526 aa).

The segment at 1-291 (GFPGEKGPSG…PRSPPSLRPK (291 aa)) is disordered. Low complexity-rich tracts occupy residues 9–36 (SGEA…LGLP), 44–81 (LPGV…NGAP), and 110–131 (YPGN…SVGP). The segment covering 165–176 (RGDKGEPGDKGP) has biased composition (basic and acidic residues). Pro residues predominate over residues 249–261 (AGPPGPPGPPGPP). Residues 263–526 (ASGGGYDFGY…YVDVGPVCFK (264 aa)) constitute a propeptide, C-terminal propeptide. The region spanning 293 to 526 (YEVDATLKSL…YVDVGPVCFK (234 aa)) is the Fibrillar collagen NC1 domain. Disulfide bonds link C323-C355, C363-C524, and C432-C477. 5 residues coordinate Ca(2+): D341, N343, Q344, C346, and D349.

It belongs to the fibrillar collagen family. As to quaternary structure, trimers of one alpha 2(I) and two alpha 1(I) chains. Interacts (via C-terminus) with TMEM131 (via PapD-L domain); the interaction is direct and is involved in assembly and TRAPPIII ER-to-Golgi transport complex-dependent secretion of collagen. In terms of processing, prolines at the third position of the tripeptide repeating unit (G-X-Y) are hydroxylated in some or all of the chains. As to expression, forms the fibrils of tendon, ligaments and bones. In bones the fibrils are mineralized with calcium hydroxyapatite.

The protein resides in the secreted. Its subcellular location is the extracellular space. It localises to the extracellular matrix. In terms of biological role, type I collagen is a member of group I collagen (fibrillar forming collagen). This chain is Collagen alpha-2(I) chain (COL1A2), found in Oryctolagus cuniculus (Rabbit).